Reading from the N-terminus, the 186-residue chain is Transcription factor pgmR (186 aa).

The zn(2)-C6 fungal-type DNA-binding region spans 19–46 (CDECGAAKLKCDRGHPSCGRCISLGLKC). Residues 52–98 (RKAGKPRRDAQSATRPPPTPGDSGPPLDYNSFGPTSPPSSVGDGATL) are disordered.

It localises to the nucleus. Its function is as follows. Transcription factor that specifically regulates the expression of the pgm gene cluster that mediates the biosynthesis of cryptic naphthoquinones derived pigments responsible for the coloration of the fruiting bodies. This is Transcription factor pgmR from Aspergillus terreus (strain NIH 2624 / FGSC A1156).